A 319-amino-acid polypeptide reads, in one-letter code: rRNA adenine N-6-methyltransferase (319 aa).

The interval 1 to 59 is disordered; it reads MARAPRSPHPARSRETSRAHPPYGTRADRAPGRGRDRDRSPDSPGNTSSRDGGRSPDRA. Residues 26 to 41 are compositionally biased toward basic and acidic residues; the sequence is RADRAPGRGRDRDRSP. Residues Asn66, Leu68, Gly93, Glu114, Asp141, and Asn157 each coordinate S-adenosyl-L-methionine.

It belongs to the class I-like SAM-binding methyltransferase superfamily. rRNA adenine N(6)-methyltransferase family.

The catalysed reaction is adenosine(2085) in 23S rRNA + 2 S-adenosyl-L-methionine = N(6)-dimethyladenosine(2085) in 23S rRNA + 2 S-adenosyl-L-homocysteine + 2 H(+). Functionally, this protein produces a dimethylation of the adenine residue at position 2085 in 23S rRNA, resulting in reduced affinity between ribosomes and macrolide-lincosamide-streptogramin B antibiotics. In Streptomyces fradiae (Streptomyces roseoflavus), this protein is rRNA adenine N-6-methyltransferase (ermSF).